Consider the following 209-residue polypeptide: PRA1 family protein E (209 aa).

Positions 1 to 20 (MNQKPPPYGYGGAGGGGVGP) are disordered. The span at 9 to 19 (GYGGAGGGGVG) shows a compositional bias: gly residues. 3 helical membrane passes run 90–110 (IVFL…VVFI), 132–152 (VDDK…LVYT), and 155–175 (GENV…HGAF).

It belongs to the PRA1 family. In terms of assembly, interacts with PRA1B1, PRA1B2, PRA1B3, PRA1B4, PRA1B5 and PRA1B6. Expressed in hypocotyls, roots, lateral roots, columella cells, leaves and shoot apex.

The protein localises to the endosome membrane. May be involved in both secretory and endocytic intracellular trafficking in the endosomal/prevacuolar compartments. The sequence is that of PRA1 family protein E (PRA1E) from Arabidopsis thaliana (Mouse-ear cress).